The chain runs to 415 residues: Lipid II:glycine glycyltransferase (415 aa).

The protein belongs to the FemABX family.

It localises to the cytoplasm. It catalyses the reaction beta-D-GlcNAc-(1-&gt;4)-Mur2Ac(oyl-L-Ala-D-isoglutaminyl-L-Lys-D-Ala-D-Ala)-di-trans,octa-cis-undecaprenyl diphosphate + glycyl-tRNA(Gly) = beta-D-GlcNAc-(1-&gt;4)-Mur2Ac(oyl-L-Ala-D-isoglutaminyl-L-Lys-(N(6)-Gly)-D-Ala-D-Ala)-di-trans,octa-cis-undecaprenyl diphosphate + tRNA(Gly) + H(+). Catalyzes the incorporation of amino acid(s) into the interchain peptide bridge of peptidoglycan, using aminoacyl-tRNA as amino acid donor. This chain is Lipid II:glycine glycyltransferase (femX), found in Staphylococcus saprophyticus subsp. saprophyticus (strain ATCC 15305 / DSM 20229 / NCIMB 8711 / NCTC 7292 / S-41).